Reading from the N-terminus, the 147-residue chain is Large ribosomal subunit protein uL13 (147 aa).

Belongs to the universal ribosomal protein uL13 family. As to quaternary structure, part of the 50S ribosomal subunit.

Its function is as follows. This protein is one of the early assembly proteins of the 50S ribosomal subunit, although it is not seen to bind rRNA by itself. It is important during the early stages of 50S assembly. The sequence is that of Large ribosomal subunit protein uL13 from Pseudothermotoga lettingae (strain ATCC BAA-301 / DSM 14385 / NBRC 107922 / TMO) (Thermotoga lettingae).